A 103-amino-acid polypeptide reads, in one-letter code: MIITTTGIIEGKPIRQYFGLVNGEAIMGANVVRDIFASITDIVGGRSGAYESKLAHAREIALEEMTEQARRMGANAIVGVDLDYEVIREGMLMVSASGTAVQI.

Belongs to the UPF0145 family.

In Desulforamulus reducens (strain ATCC BAA-1160 / DSM 100696 / MI-1) (Desulfotomaculum reducens), this protein is UPF0145 protein Dred_2155.